Consider the following 1048-residue polypeptide: Probable histidine kinase 2 (1048 aa).

The Cytoplasmic portion of the chain corresponds to 1–16 (MREVEEVSKWRRRCCY). A helical membrane pass occupies residues 17-37 (FWILFPLAVIATCMTITVVTF). Over 38 to 336 (CSSTMYMTEV…AMVGVFRRGG (299 aa)) the chain is Extracellular. The chain crosses the membrane as a helical span at residues 337–357 (VTMVAVACAAAAAATVACVLM). Residues 358–1048 (ARALRRAVAR…AVHGVCKGKN (691 aa)) are Cytoplasmic-facing. The Histidine kinase domain maps to 398–662 (SASHDIRSAL…CFGFNVLLKT (265 aa)). H401 is subject to Phosphohistidine; by autocatalysis. The Response regulatory domain maps to 912–1044 (HVLLVEDTLV…RIVEAVHGVC (133 aa)). Position 975 is a 4-aspartylphosphate (D975).

Post-translationally, activation probably requires a transfer of a phosphate group between a His in the transmitter domain and an Asp of the receiver domain.

Its subcellular location is the cell membrane. The enzyme catalyses ATP + protein L-histidine = ADP + protein N-phospho-L-histidine.. Functionally, cytokinin receptor related to bacterial two-component regulators. Functions as a histidine kinase and transmits the stress signal to a downstream MAPK cascade. The chain is Probable histidine kinase 2 from Oryza sativa subsp. indica (Rice).